Reading from the N-terminus, the 128-residue chain is MNALGKHVIAEFYECDYETINNHELVEDIMLKSVDLSGATTIKSVFHRFSPYGVSGVVVVSESHFAIHTWPEYGYCAVDVFTCGDLIDNQAALDYLKEKFGSKNVSVVEMKRGVLNLGVDLHHKPVGN.

S63 acts as the Schiff-base intermediate with substrate; via pyruvic acid in catalysis. S63 bears the Pyruvic acid (Ser); by autocatalysis mark. Residue H68 is the Proton acceptor; for processing activity of the active site. Residue C83 is the Proton donor; for catalytic activity of the active site.

Belongs to the prokaryotic AdoMetDC family. Type 1 subfamily. As to quaternary structure, heterotetramer of two alpha and two beta chains arranged as a dimer of alpha/beta heterodimers. The cofactor is pyruvate. In terms of processing, is synthesized initially as an inactive proenzyme. Formation of the active enzyme involves a self-maturation process in which the active site pyruvoyl group is generated from an internal serine residue via an autocatalytic post-translational modification. Two non-identical subunits are generated from the proenzyme in this reaction, and the pyruvate is formed at the N-terminus of the alpha chain, which is derived from the carboxyl end of the proenzyme. The post-translation cleavage follows an unusual pathway, termed non-hydrolytic serinolysis, in which the side chain hydroxyl group of the serine supplies its oxygen atom to form the C-terminus of the beta chain, while the remainder of the serine residue undergoes an oxidative deamination to produce ammonia and the pyruvoyl group blocking the N-terminus of the alpha chain.

It carries out the reaction S-adenosyl-L-methionine + H(+) = S-adenosyl 3-(methylsulfanyl)propylamine + CO2. Its pathway is amine and polyamine biosynthesis; S-adenosylmethioninamine biosynthesis; S-adenosylmethioninamine from S-adenosyl-L-methionine: step 1/1. Its function is as follows. Catalyzes the decarboxylation of S-adenosylmethionine to S-adenosylmethioninamine (dcAdoMet), the propylamine donor required for the synthesis of the polyamines spermine and spermidine from the diamine putrescine. The polypeptide is S-adenosylmethionine decarboxylase proenzyme (Leptospira borgpetersenii serovar Hardjo-bovis (strain JB197)).